Reading from the N-terminus, the 91-residue chain is Small ribosomal subunit protein uS19 (91 aa).

This sequence belongs to the universal ribosomal protein uS19 family.

In terms of biological role, protein S19 forms a complex with S13 that binds strongly to the 16S ribosomal RNA. The polypeptide is Small ribosomal subunit protein uS19 (Trichodesmium erythraeum (strain IMS101)).